The primary structure comprises 104 residues: Thioredoxin (104 aa).

A Thioredoxin domain is found at Ala2–Leu104. An intrachain disulfide couples Cys29 to Cys32.

This sequence belongs to the thioredoxin family.

Functionally, component of the thioredoxin-thioredoxin reductase system. Participates in various redox reactions through the reversible oxidation of its active center dithiol to a disulfide and catalyzes dithiol-disulfide exchange reactions. The sequence is that of Thioredoxin (trxA) from Staphylococcus haemolyticus (strain JCSC1435).